Consider the following 206-residue polypeptide: Musculin (206 aa).

Residues 1–115 form a disordered region; sequence MSTGSVSDPE…QSQRNAANAR (115 aa). Residues 46 to 56 show a composition bias toward acidic residues; that stretch reads SAEEEDPDGEE. Residues 71–76 carry the Nuclear localization signal motif; that stretch reads KRKRPR. Over residues 78-92 the composition is skewed to gly residues; sequence AGGGGAGGSAGGGGK. Low complexity predominate over residues 93-102; that stretch reads KPLPAKGSAA. The bHLH domain occupies 107–159; that stretch reads SQRNAANARERARMRVLSKAFSRLKTSLPWVPPDTKLSKLDTLRLASSYIAHL.

Efficient DNA binding requires dimerization with another bHLH protein. Binds DNA as a homodimer or a heterodimer. Forms a heterodimer with TCF3. As to expression, expressed in lymphoid tissues, B-cell lines and activated B-cells.

It localises to the nucleus. Its function is as follows. Transcription repressor capable of inhibiting the transactivation capability of TCF3/E47. May play a role in regulating antigen-dependent B-cell differentiation. The chain is Musculin (MSC) from Homo sapiens (Human).